The sequence spans 496 residues: MSETGCRHYQSYVKEHSYDTFRVIDAYFAACVNRDARERKAIHCNCFECGSYGIQLYACLHCIYFGCRGAHITSHLRSKKHNVALELSHGTLYCYACRDFIYDARSREYALINRKLEAKDLQKSIGWVPWVPTTKETNLLLANARRRLVRPNQTIGLRGLLNLGATCFMNCIVQALVHTPLLSDYFMSDRHDCGSKSSHKCLVCEVSRLFQEFYSGSRSPLSLHRLLHLIWNHAKHLAGYEQQDAHEFFIATLDVLHRHCVKAKAEHESKSNSSGSGSGTNSSNSSSSHCYGQCNCIIDQIFTGMLQSDVVCQACNGVSTTYDPFWDISLDLGETTTHGGVTPKTLIDCLERYTRAEHLGSAAKIKCSTCKSYQESTKQFSLRTLPSVVSFHLKRFEHSALIDRKISSFIQFPVEFDMTPFMSEKKNAYGDFRFSLYAVVNHVGTIDTGHYTAYVRHQKDTWVKCDDHVITMASLKQVLDSEGYLLFYHKNVLEYE.

A UBP-type zinc finger spans residues 4–120 (TGCRHYQSYV…LINRKLEAKD (117 aa)). Zn(2+)-binding residues include cysteine 6, histidine 8, cysteine 46, cysteine 49, cysteine 59, cysteine 62, cysteine 67, histidine 71, histidine 75, histidine 81, cysteine 94, and cysteine 97. Residues 158–491 (RGLLNLGATC…EGYLLFYHKN (334 aa)) form the USP domain. Cysteine 167 serves as the catalytic Nucleophile. Histidine 450 serves as the catalytic Proton acceptor.

This sequence belongs to the peptidase C19 family. UBP8 subfamily. As to quaternary structure, component of the SAGA transcription coactivator-HAT complex, at least composed of Ada2b, not/nonstop, Pcaf/Gcn5, Sgf11 and Spt3. As to expression, expressed in the optic lobe and central brain. Highly expressed in the lamina precursor cells but not in differentiated lamina neurons. Also expressed in marginal, epithelial and medulla glial cells adjacent to the lamina plexus.

Its subcellular location is the nucleus. It catalyses the reaction Thiol-dependent hydrolysis of ester, thioester, amide, peptide and isopeptide bonds formed by the C-terminal Gly of ubiquitin (a 76-residue protein attached to proteins as an intracellular targeting signal).. In terms of biological role, histone deubiquitinating component of the transcription regulatory histone acetylation (HAT) complex SAGA. Catalyzes the deubiquitination of histone H2B, thereby acting as a coactivator in a large subset of genes. Required to counteract heterochromatin silencing. Controls the development of neuronal connectivity in visual system by being required for accurate axon targeting in the optic lobe. Required for expression of ecdysone-induced genes such as br/broad. The chain is Ubiquitin carboxyl-terminal hydrolase nonstop (not) from Drosophila melanogaster (Fruit fly).